We begin with the raw amino-acid sequence, 312 residues long: Olfactory receptor 2C1 (312 aa).

Residues 1–24 (MEVDSNSSSGSFILMGVSDHPHLE) are Extracellular-facing. Asn-6 is a glycosylation site (N-linked (GlcNAc...) asparagine). Residues 25–48 (IIFFAVILASYLLTLVGNLTIILL) traverse the membrane as a helical segment. Over 49 to 57 (SRLDARLHT) the chain is Cytoplasmic. A helical transmembrane segment spans residues 58-79 (PMYFFLSNLSSLDLAFTTSSVP). The Extracellular segment spans residues 80 to 100 (QMLKNLWGPDKTISYGGCVTQ). Cys-97 and Cys-189 are oxidised to a cystine. The helical transmembrane segment at 101–120 (LYVFLWLGATECILLVVMAF) threads the bilayer. Residues 121–139 (DRYVAVCRPLHYMTVMNPR) are Cytoplasmic-facing. The helical transmembrane segment at 140–160 (LCWGLAAISWLGGLGNSVIQS) threads the bilayer. The Extracellular portion of the chain corresponds to 161–200 (TFTLQLPFCGHRKVDNFLCEVPAMIKLACGDTSLNEAVLN). The chain crosses the membrane as a helical span at residues 201–222 (GVCTFFTVVPVSVILVSYCFIA). Residues 223–236 (QAVMKIRSVEGRRK) are Cytoplasmic-facing. A helical transmembrane segment spans residues 237–261 (AFNTCVSHLVVVFLFYGSAIYGYLL). Residues 262–272 (PAKSSNQSQGK) lie on the Extracellular side of the membrane. A helical membrane pass occupies residues 273-292 (FISLFYSVVTPMVNPLIYTL). Residues 293–312 (RNKEVKGALGRLLGKGRGAS) lie on the Cytoplasmic side of the membrane.

This sequence belongs to the G-protein coupled receptor 1 family. Olfactory epithelium. Present in various subcellular compartments of the olfactory sensory neurons, particularly in the axonal processes and neve terminals.

The protein localises to the cell membrane. Its function is as follows. Olfactory receptor that is activated by the binding of organosulfur odorants with thioether groups such as (methylthio)methanetiol (MTMT). Also binds odorants acetophenone and benzaldehyde. The activity of this receptor is mediated by G proteins which activate adenylyl cyclase. May be involved in the molecular processes underlying fasciculation and targeting of olfactory axons. The polypeptide is Olfactory receptor 2C1 (Mus musculus (Mouse)).